A 954-amino-acid chain; its full sequence is Regulatory protein FlaEY (954 aa).

Its function is as follows. Functions in trans to modulate the level of transcription of the flagellin genes and several genes encoding chemotaxis functions. It is itself temporally controlled. This Caulobacter vibrioides (strain ATCC 19089 / CIP 103742 / CB 15) (Caulobacter crescentus) protein is Regulatory protein FlaEY (flaEY).